The primary structure comprises 75 residues: U-stichotoxin-Hau3a (75 aa).

A signal peptide spans M1–A19. The propeptide occupies E20 to R26. 3 disulfides stabilise this stretch: C31–C71, C33–C61, and C54–C72.

It belongs to the sea anemone sodium channel inhibitory toxin family. Type I subfamily. In terms of processing, contains 3 disulfide bonds.

The protein resides in the secreted. The protein localises to the nematocyst. Toxin that is lethal to crab. This chain is U-stichotoxin-Hau3a, found in Heteractis aurora (Banded sea anemone).